Here is a 243-residue protein sequence, read N- to C-terminus: 7-cyano-7-deazaguanine synthase (243 aa).

9 to 19 is a binding site for ATP; that stretch reads FSGGQDSTTCL. Zn(2+) is bound by residues cysteine 205, cysteine 220, cysteine 223, and cysteine 226.

It belongs to the QueC family. The cofactor is Zn(2+).

The catalysed reaction is 7-carboxy-7-deazaguanine + NH4(+) + ATP = 7-cyano-7-deazaguanine + ADP + phosphate + H2O + H(+). It participates in purine metabolism; 7-cyano-7-deazaguanine biosynthesis. Its function is as follows. Catalyzes the ATP-dependent conversion of 7-carboxy-7-deazaguanine (CDG) to 7-cyano-7-deazaguanine (preQ(0)). In Albidiferax ferrireducens (strain ATCC BAA-621 / DSM 15236 / T118) (Rhodoferax ferrireducens), this protein is 7-cyano-7-deazaguanine synthase.